Consider the following 153-residue polypeptide: Ribosome maturation factor RimP (153 aa).

It belongs to the RimP family.

Its subcellular location is the cytoplasm. In terms of biological role, required for maturation of 30S ribosomal subunits. This chain is Ribosome maturation factor RimP, found in Glaesserella parasuis serovar 5 (strain SH0165) (Haemophilus parasuis).